The sequence spans 235 residues: Phosphoribosylaminoimidazole-succinocarboxamide synthase (235 aa).

It belongs to the SAICAR synthetase family.

The enzyme catalyses 5-amino-1-(5-phospho-D-ribosyl)imidazole-4-carboxylate + L-aspartate + ATP = (2S)-2-[5-amino-1-(5-phospho-beta-D-ribosyl)imidazole-4-carboxamido]succinate + ADP + phosphate + 2 H(+). It participates in purine metabolism; IMP biosynthesis via de novo pathway; 5-amino-1-(5-phospho-D-ribosyl)imidazole-4-carboxamide from 5-amino-1-(5-phospho-D-ribosyl)imidazole-4-carboxylate: step 1/2. The sequence is that of Phosphoribosylaminoimidazole-succinocarboxamide synthase from Caldanaerobacter subterraneus subsp. tengcongensis (strain DSM 15242 / JCM 11007 / NBRC 100824 / MB4) (Thermoanaerobacter tengcongensis).